The chain runs to 192 residues: Molybdenum cofactor guanylyltransferase (192 aa).

GTP contacts are provided by residues 10–12 (LAG), Lys-23, Asn-51, Asp-69, and Asp-99. Asp-99 is a binding site for Mg(2+).

The protein belongs to the MobA family. In terms of assembly, monomer. Requires Mg(2+) as cofactor.

It localises to the cytoplasm. The enzyme catalyses Mo-molybdopterin + GTP + H(+) = Mo-molybdopterin guanine dinucleotide + diphosphate. In terms of biological role, transfers a GMP moiety from GTP to Mo-molybdopterin (Mo-MPT) cofactor (Moco or molybdenum cofactor) to form Mo-molybdopterin guanine dinucleotide (Mo-MGD) cofactor. This chain is Molybdenum cofactor guanylyltransferase, found in Haemophilus influenzae (strain 86-028NP).